Here is a 596-residue protein sequence, read N- to C-terminus: UvrABC system protein C (596 aa).

The GIY-YIG domain maps to 16-95; sequence SSPGVYRFYS…IKENKPKYNV (80 aa). Residues 209–244 enclose the UVR domain; the sequence is SSVKKYYQEKMLSAAEDMQFEKAQFFKERYNSVLGL.

The protein belongs to the UvrC family. Interacts with UvrB in an incision complex.

Its subcellular location is the cytoplasm. In terms of biological role, the UvrABC repair system catalyzes the recognition and processing of DNA lesions. UvrC both incises the 5' and 3' sides of the lesion. The N-terminal half is responsible for the 3' incision and the C-terminal half is responsible for the 5' incision. The polypeptide is UvrABC system protein C (Cytophaga hutchinsonii (strain ATCC 33406 / DSM 1761 / CIP 103989 / NBRC 15051 / NCIMB 9469 / D465)).